We begin with the raw amino-acid sequence, 134 residues long: Small ribosomal subunit protein uS8c (134 aa).

In terms of assembly, component of the chloroplast small ribosomal subunit (SSU). Mature 70S chloroplast ribosomes of higher plants consist of a small (30S) and a large (50S) subunit. The 30S small subunit contains 1 molecule of ribosomal RNA (16S rRNA) and 24 different proteins. The 50S large subunit contains 3 rRNA molecules (23S, 5S and 4.5S rRNA) and 33 different proteins.

It is found in the plastid. The protein resides in the chloroplast. In terms of biological role, component of the chloroplast ribosome (chloro-ribosome), a dedicated translation machinery responsible for the synthesis of chloroplast genome-encoded proteins, including proteins of the transcription and translation machinery and components of the photosynthetic apparatus. This Spinacia oleracea (Spinach) protein is Small ribosomal subunit protein uS8c (rps8).